The primary structure comprises 151 residues: Cysteine protease inhibitor 5 (151 aa).

Intrachain disulfides connect Cys-13-Cys-65 and Cys-114-Cys-120.

It belongs to the protease inhibitor I3 (leguminous Kunitz-type inhibitor) family.

The protein localises to the vacuole. Its function is as follows. Inhibitor of cysteine proteases. May protect the plant by inhibiting proteases of invading organisms. This Solanum tuberosum (Potato) protein is Cysteine protease inhibitor 5.